The sequence spans 362 residues: Vignain (362 aa).

The first 20 residues, 1–20 (MAMKKLLWVVLSLSLVLGVA), serve as a signal peptide directing secretion. Positions 21–126 (NSFDFHEKDL…SGTFMYEKVG (106 aa)) are cleaved as a propeptide — activation peptide. 3 disulfide bridges follow: Cys-149-Cys-191, Cys-183-Cys-224, and Cys-282-Cys-334. Residue Cys-152 is part of the active site. Residues His-288 and Asn-309 contribute to the active site. Residues Asn-326 and Asn-346 are each glycosylated (N-linked (GlcNAc...) asparagine). A propeptide spans 353–362 (GSLSSPKDEL) (removed in mature form). The short motif at 359–362 (KDEL) is the Prevents secretion from ER element.

It belongs to the peptidase C1 family. In terms of processing, the mature protein is not glycosylated. The precursor stored in the endoplasmic reticulum lumen is processed during the transport to proteins bodies to two dominant mature forms that differ by a single amino acid residue at the N-terminus.

Its subcellular location is the endoplasmic reticulum lumen. It is found in the vacuole. It localises to the aleurone grain. Functionally, thought to be involved in the hydrolysis of stored seed proteins. In vitro, catalyzes the hydrolysis of proteins, such as azocasein. Shows a preferential cleavage for Asn-|-Xaa in small molecule substrates such as Boc-Asn-|-OPHNO(2). The protein is Vignain of Vigna mungo (Black gram).